Reading from the N-terminus, the 521-residue chain is Protein NRT1/ PTR FAMILY 4.2 (521 aa).

Helical transmembrane passes span 30-50 (IVCVVVMMENIVFIANGFNFV), 65-85 (ANMVTNFMGTSFLLTLFGGFI), 89-109 (FVTHFTTFIVFCCIELMGLIL), 133-153 (AILFTGLYAMAIGTGGLKASL), 172-192 (FFDWLYFSICSGCLLAVTVVL), 204-224 (FNISVGILATALCIFTVGLPF), 297-317 (FLGLLPIFGSTIVMSCCVAQL), 338-358 (IPVPSLTAIPLIFMLLSIPLY), 381-401 (IGLGLALSSVSMAVSAIVEAK), 413-433 (ISVLWLVFQYLMLSVSDMLTL), 451-471 (ISTALGWCSTALGFFLSTTLV), and 498-518 (LFYVLLCVLNTLNLLNYIFWA).

It belongs to the major facilitator superfamily. Proton-dependent oligopeptide transporter (POT/PTR) (TC 2.A.17) family. Expressed in siliques.

The protein resides in the membrane. Functionally, involved in abscisic acid transport. This Arabidopsis thaliana (Mouse-ear cress) protein is Protein NRT1/ PTR FAMILY 4.2 (NPF4.2).